The sequence spans 338 residues: MIAVLRINHRPFRDKRITTHVALTARAFGASSILVDEKDETLEQTINKVVENFGGNFFIKSGVDWKREFRNFKGIRVHLTMYGRPLEDVVKEIRESKKDVMILVGSEKVPFEAYEIADYNVSVTNQPISEVSALAIFLDRFYDGEELNWRFTGKINVYPSERGKKVKIIPDEQGCLDLLYKYGASDYLINHVKSVKELAVAIAKKTNADINLVTAGALLHDIGRTQVQGITHAVVGADILRREGIDDRVVSIVEKHIGAGIQSEEAVKLGLPPDNYVPETIEEMIVAHADNLFAGDKRLKLQQVVDNYRKKGLEDAAERIAKLHKFLSTVIGQDMDEI.

S-adenosyl-L-methionine-binding positions include leucine 79 and 105-109 (GSEKV). The HD domain maps to 188–295 (LINHVKSVKE…VAHADNLFAG (108 aa)).

It belongs to the aTrm56 family. In terms of assembly, homodimer.

It localises to the cytoplasm. The enzyme catalyses cytidine(56) in tRNA + S-adenosyl-L-methionine = 2'-O-methylcytidine(56) in tRNA + S-adenosyl-L-homocysteine + H(+). Its function is as follows. Specifically catalyzes the AdoMet-dependent 2'-O-ribose methylation of cytidine at position 56 in tRNAs. This is tRNA (cytidine(56)-2'-O)-methyltransferase from Thermoplasma volcanium (strain ATCC 51530 / DSM 4299 / JCM 9571 / NBRC 15438 / GSS1).